A 241-amino-acid chain; its full sequence is MNSGRPETMENLPALYTIFQGEVAMVTDYGAFIKIPGCRKQGLVHRTHMSSCRVDKPSEIVDVGDKVWVKLIGREMKNDRIKVSLSMKVVNQGTGKDLDPNNVIIEQEERRRRSFQDYTGQKITLEAVLNTTCKKCGCKGHFAKDCFMQPGGTKYSLIPDEEEEKEEAKSAEFEKPDPTRNPSRKRKKEKKKKKHRDRKSSDSDSSDSESDTGKRARHTSKDSKAAKKKKKKKKHKKKHKE.

The region spanning 16 to 88 (YTIFQGEVAM…DRIKVSLSMK (73 aa)) is the S1 motif domain. S114 carries the post-translational modification Phosphoserine. The CCHC-type zinc-finger motif lies at 131–148 (TTCKKCGCKGHFAKDCFM). K144 is subject to N6-acetyllysine. Residues 161-241 (EEEEKEEAKS…KKKHKKKHKE (81 aa)) are disordered. Basic and acidic residues predominate over residues 166–178 (EEAKSAEFEKPDP). Residues 182 to 198 (PSRKRKKEKKKKKHRDR) are compositionally biased toward basic residues. Position 183 is a phosphoserine (S183). The segment covering 211–225 (DTGKRARHTSKDSKA) has biased composition (basic and acidic residues). The segment covering 226–241 (AKKKKKKKKHKKKHKE) has biased composition (basic residues).

In terms of assembly, interacts with PNN. Associates with the 60S ribosomal subunit.

It is found in the nucleus. The protein resides in the nucleolus. The protein is Zinc finger CCHC domain-containing protein 17 (ZCCHC17) of Homo sapiens (Human).